Consider the following 431-residue polypeptide: Enolase (431 aa).

Glutamine 167 serves as a coordination point for (2R)-2-phosphoglycerate. Residue glutamate 209 is the Proton donor of the active site. Aspartate 246, glutamate 289, and aspartate 316 together coordinate Mg(2+). The (2R)-2-phosphoglycerate site is built by lysine 341, arginine 370, serine 371, and lysine 392. Lysine 341 acts as the Proton acceptor in catalysis.

It belongs to the enolase family. In terms of assembly, component of the RNA degradosome, a multiprotein complex involved in RNA processing and mRNA degradation. It depends on Mg(2+) as a cofactor.

It is found in the cytoplasm. The protein resides in the secreted. It localises to the cell surface. The catalysed reaction is (2R)-2-phosphoglycerate = phosphoenolpyruvate + H2O. It functions in the pathway carbohydrate degradation; glycolysis; pyruvate from D-glyceraldehyde 3-phosphate: step 4/5. Catalyzes the reversible conversion of 2-phosphoglycerate (2-PG) into phosphoenolpyruvate (PEP). It is essential for the degradation of carbohydrates via glycolysis. In Shewanella putrefaciens (strain CN-32 / ATCC BAA-453), this protein is Enolase.